Consider the following 536-residue polypeptide: Membrane protein insertase YidC (536 aa).

A run of 5 helical transmembrane segments spans residues 3-23 (LQRNFFILIFFFISFLLWKTW), 346-366 (ICGNWGVSIILITFIIKGITF), 417-437 (GGCFPLFIQMPIFLALYYMLI), 454-474 (LSDQDPFYVLPILMGVTMFFI), and 494-514 (IPILFTVFFLWFPSGLVLYYL).

The protein belongs to the OXA1/ALB3/YidC family. Type 1 subfamily. In terms of assembly, interacts with the Sec translocase complex via SecD. Specifically interacts with transmembrane segments of nascent integral membrane proteins during membrane integration.

Its subcellular location is the cell membrane. Required for the insertion and/or proper folding and/or complex formation of integral membrane proteins into the membrane. Involved in integration of membrane proteins that insert both dependently and independently of the Sec translocase complex, as well as at least some lipoproteins. Aids folding of multispanning membrane proteins. This Buchnera aphidicola subsp. Baizongia pistaciae (strain Bp) protein is Membrane protein insertase YidC.